The chain runs to 159 residues: Protransforming growth factor alpha (159 aa).

Residues 1 to 23 (MVPATGQLALLALGILLAVCQAL) form the signal peptide. The propeptide at 24–38 (ENSTSPLSDSPVAAA) is removed in mature form. The Extracellular portion of the chain corresponds to 24–97 (ENSTSPLSDS…AVVAASQKKQ (74 aa)). A glycan (N-linked (GlcNAc...) asparagine) is linked at Asn-25. The region spanning 44–83 (NKCPDSHTQYCFHGTCRFLVQEEKPACVCHSGYVGVRCEH) is the EGF-like domain. 3 disulfides stabilise this stretch: Cys-46–Cys-59, Cys-54–Cys-70, and Cys-72–Cys-81. Residues 89-159 (VVAASQKKQA…TACCHSETVV (71 aa)) constitute a propeptide, removed in mature form. A helical transmembrane segment spans residues 98-123 (AITALVVVSIVALAVLIITCVLIHCC). Topologically, residues 124–159 (QLRKHCEWCRALVCRHEKPSALLKGRTACCHSETVV) are cytoplasmic. S-palmitoyl cysteine attachment occurs at residues Cys-152 and Cys-153.

As to quaternary structure, interacts with the PDZ domains of SDCBP and SNTA1. The interaction with SDCBP, is required for the targeting to the cell surface. In the endoplasmic reticulum, in its immature form (i.e. with a prosegment and lacking full N-glycosylation), interacts with CNIH. In the Golgi apparatus, may form a complex with CNIH and GORASP2. Interacts (via cytoplasmic C-terminal domain) with NKD2. Interacts with MAGI3.

Its subcellular location is the secreted. The protein localises to the extracellular space. It localises to the cell membrane. In terms of biological role, TGF alpha is a mitogenic polypeptide that is able to bind to the EGF receptor/EGFR and to act synergistically with TGF beta to promote anchorage-independent cell proliferation in soft agar. The chain is Protransforming growth factor alpha (Tgfa) from Mus musculus (Mouse).